The following is a 297-amino-acid chain: Small ribosomal subunit protein uS2 (297 aa).

A disordered region spans residues 266 to 297 (GASWDAAEPSDWAATPAAAGQEWAASGATEQW). The span at 282-297 (AAAGQEWAASGATEQW) shows a compositional bias: low complexity.

Belongs to the universal ribosomal protein uS2 family. Component of the small ribosomal subunit. Mature ribosomes consist of a small (40S) and a large (60S) subunit. The 40S subunit contains about 33 different proteins and 1 molecule of RNA (18S). The 60S subunit contains about 49 different proteins and 3 molecules of RNA (25S, 5.8S and 5S). Interacts with rps21.

The protein localises to the cytoplasm. Functionally, required for the assembly and/or stability of the 40S ribosomal subunit. Required for the processing of the 20S rRNA-precursor to mature 18S rRNA in a late step of the maturation of 40S ribosomal subunits. The sequence is that of Small ribosomal subunit protein uS2 (rps0) from Sclerotinia sclerotiorum (strain ATCC 18683 / 1980 / Ss-1) (White mold).